Here is a 165-residue protein sequence, read N- to C-terminus: Crossover junction endodeoxyribonuclease RuvC (165 aa).

Active-site residues include D7, E67, and D140. Mg(2+)-binding residues include D7, E67, and D140.

It belongs to the RuvC family. Homodimer which binds Holliday junction (HJ) DNA. The HJ becomes 2-fold symmetrical on binding to RuvC with unstacked arms; it has a different conformation from HJ DNA in complex with RuvA. In the full resolvosome a probable DNA-RuvA(4)-RuvB(12)-RuvC(2) complex forms which resolves the HJ. It depends on Mg(2+) as a cofactor.

The protein localises to the cytoplasm. It carries out the reaction Endonucleolytic cleavage at a junction such as a reciprocal single-stranded crossover between two homologous DNA duplexes (Holliday junction).. Functionally, the RuvA-RuvB-RuvC complex processes Holliday junction (HJ) DNA during genetic recombination and DNA repair. Endonuclease that resolves HJ intermediates. Cleaves cruciform DNA by making single-stranded nicks across the HJ at symmetrical positions within the homologous arms, yielding a 5'-phosphate and a 3'-hydroxyl group; requires a central core of homology in the junction. The consensus cleavage sequence is 5'-(A/T)TT(C/G)-3'. Cleavage occurs on the 3'-side of the TT dinucleotide at the point of strand exchange. HJ branch migration catalyzed by RuvA-RuvB allows RuvC to scan DNA until it finds its consensus sequence, where it cleaves and resolves the cruciform DNA. This Caldanaerobacter subterraneus subsp. tengcongensis (strain DSM 15242 / JCM 11007 / NBRC 100824 / MB4) (Thermoanaerobacter tengcongensis) protein is Crossover junction endodeoxyribonuclease RuvC.